A 551-amino-acid polypeptide reads, in one-letter code: Solute carrier family 22 member 6 (551 aa).

The Cytoplasmic portion of the chain corresponds to 1–9; it reads MAFNDLLKQ. A helical membrane pass occupies residues 10-30; the sequence is VGGVGRFQLIQVTMVVAPLLL. At 31 to 135 the chain is on the extracellular side; it reads MASHNTLQNF…LVCSHRAFRQ (105 aa). Asn-39, Asn-56, Asn-92, and Asn-113 each carry an N-linked (GlcNAc...) asparagine glycan. A helical membrane pass occupies residues 136-156; the sequence is LAQSLYMVGVLLGAMVFGYLA. The Cytoplasmic portion of the chain corresponds to 157–164; that stretch reads DRLGRRKV. Residues 165–187 form a helical membrane-spanning segment; sequence LILNYLQTAVSGTCAAYAPNYTV. Residues 188-195 are Extracellular-facing; that stretch reads YCVFRLLS. Residues 196–216 traverse the membrane as a helical segment; the sequence is GMSLASIAINCMTLNVEWMPI. Residues 217–224 lie on the Cytoplasmic side of the membrane; the sequence is HTRAYVGT. The helical transmembrane segment at 225–245 threads the bilayer; the sequence is LIGYVYSLGQFLLAGIAYAVP. Over 246 to 248 the chain is Extracellular; that stretch reads HWR. The chain crosses the membrane as a helical span at residues 249 to 269; the sequence is HLQLVVSVPFFIAFIYSWFFI. Over 270-337 the chain is Cytoplasmic; that stretch reads ESARWYSSSG…ELLRCPTLRH (68 aa). The helical transmembrane segment at 338–358 threads the bilayer; the sequence is LFLCLSMLWFATSFAYYGLVM. Residues 359-368 lie on the Extracellular side of the membrane; that stretch reads DLQGFGVSMY. A helical transmembrane segment spans residues 369–389; it reads LIQVIFGAVDLPAKFVCFLVI. The Cytoplasmic segment spans residues 390–395; sequence NSMGRR. The chain crosses the membrane as a helical span at residues 396-416; the sequence is PAQMASLLLAGICILVNGIIP. The Extracellular portion of the chain corresponds to 417-425; the sequence is KSHTIIRTS. The helical transmembrane segment at 426 to 446 threads the bilayer; sequence LAVLGKGCLASSFNCIFLYTG. At 447–484 the chain is on the cytoplasmic side; that stretch reads ELYPTVIRQTGLGMGSTMARVGSIVSPLVSMTAEFYPS. Residues 485–505 form a helical membrane-spanning segment; the sequence is MPLFIFGAVPVVASAVTALLP. The Extracellular segment spans residues 506–551; the sequence is ETLGQPLPDTVQDLKSRSRGKQNQQQQEQQKQMMPLQASTQEKNGL. The tract at residues 514–551 is disordered; that stretch reads DTVQDLKSRSRGKQNQQQQEQQKQMMPLQASTQEKNGL. A compositionally biased stretch (low complexity) spans 526 to 537; the sequence is KQNQQQQEQQKQ. Positions 542–551 are enriched in polar residues; sequence QASTQEKNGL.

Belongs to the major facilitator (TC 2.A.1) superfamily. Organic cation transporter (TC 2.A.1.19) family. Glycosylated. Glycosylation is necessary for proper targeting of the transporter to the plasma membrane. As to expression, highly expressed in kidney; in the particular segment of the proximal tubule. In kidney, found preferentially in the cortex and outer medulla and weakly in the inner medulla. Expressed to a lower extent in brain.

The protein localises to the cell membrane. It is found in the basolateral cell membrane. The protein resides in the basal cell membrane. The catalysed reaction is (6R)-L-erythro-5,6,7,8-tetrahydrobiopterin(out) + a dicarboxylate(in) = (6R)-L-erythro-5,6,7,8-tetrahydrobiopterin(in) + a dicarboxylate(out). It catalyses the reaction L-erythro-7,8-dihydrobiopterin(out) + a dicarboxylate(in) = L-erythro-7,8-dihydrobiopterin(in) + a dicarboxylate(out). It carries out the reaction L-sepiapterin(out) + a dicarboxylate(in) = L-sepiapterin(in) + a dicarboxylate(out). The enzyme catalyses prostaglandin F2alpha(out) + a dicarboxylate(in) = prostaglandin F2alpha(in) + a dicarboxylate(out). The catalysed reaction is prostaglandin E2(out) + a dicarboxylate(in) = prostaglandin E2(in) + a dicarboxylate(out). It catalyses the reaction 3',5'-cyclic AMP(out) + a dicarboxylate(in) = 3',5'-cyclic AMP(in) + a dicarboxylate(out). It carries out the reaction 3',5'-cyclic GMP(out) + a dicarboxylate(in) = 3',5'-cyclic GMP(in) + a dicarboxylate(out). The enzyme catalyses urate(out) + a dicarboxylate(in) = urate(in) + a dicarboxylate(out). The catalysed reaction is kynurenate(out) + glutarate(in) = kynurenate(in) + glutarate(out). It catalyses the reaction (indol-3-yl)acetate(out) + a dicarboxylate(in) = (indol-3-yl)acetate(in) + a dicarboxylate(out). It carries out the reaction indoxyl sulfate(out) + a dicarboxylate(in) = indoxyl sulfate(in) + a dicarboxylate(out). The enzyme catalyses N-benzoylglycine(out) + a dicarboxylate(in) = N-benzoylglycine(in) + a dicarboxylate(out). The catalysed reaction is 3-carboxy-4-methyl-5-propyl-2-furanpropanoate(out) + a dicarboxylate(in) = 3-carboxy-4-methyl-5-propyl-2-furanpropanoate(in) + a dicarboxylate(out). Secondary active transporter that functions as a Na(+)-independent organic anion (OA)/dicarboxylate antiporter where the uptake of one molecule of OA into the cell is coupled with an efflux of one molecule of intracellular dicarboxylate such as alpha-ketoglutarate or glutarate. Mediates the uptake of OA across the basolateral side of proximal tubule epithelial cells, thereby contributing to the renal elimination of endogenous OA from the systemic circulation into the urine. Function as a biopterin transporters involved in the uptake and the secretion of coenzymes tetrahydrobiopterin (BH4) dihydrobiopterin (BH2) and sepiapterin to urine, thereby determining baseline levels of blood biopterins. Transports prostaglandin E2 (PGE2) and prostaglandin F2-alpha (PGF2-alpha) and may contribute to their renal excretion. Also mediates the uptake of cyclic nucleotides such as cAMP and cGMP. Involved in the transport of neuroactive tryptophan metabolites kynurenate (KYNA) and xanthurenate (XA) and may contribute to their secretion from the brain. May transport glutamate. Also involved in the disposition of uremic toxins and potentially toxic xenobiotics by the renal organic anion secretory pathway, helping reduce their undesired toxicological effects on the body. Uremic toxins include the indoxyl sulfate (IS), hippurate, indole acetate (IA), 3-carboxy-4- methyl-5-propyl-2-furanpropionate(CMPF) and urate. Xenobiotics include the mycotoxin ochratoxin (OTA). May also contribute to the transport of organic compounds in testes across the blood-testis-barrier. May also work as a bidirectional OA/dicarboxylate exchanger. The sequence is that of Solute carrier family 22 member 6 from Rattus norvegicus (Rat).